A 548-amino-acid polypeptide reads, in one-letter code: 4-methyl-5-nitrocatechol 5-monooxygenase (548 aa).

It belongs to the PheA/TfdB FAD monooxygenase family. Monomer. FAD serves as cofactor.

The enzyme catalyses 4-methyl-5-nitrocatechol + NADPH + O2 = 2-hydroxy-5-methylquinone + nitrite + NADP(+) + H2O + H(+). It carries out the reaction 4-methyl-5-nitrocatechol + NADH + O2 = 2-hydroxy-5-methylquinone + nitrite + NAD(+) + H2O + H(+). Activated by magnesium or manganese ions. Inhibited by concentrations of 4-methyl-5-nitrocatechol (MNC) above 2 mM. Involved in the degradation of 2,4-dinitrotoluene (2,4-DNT). Catalyzes the removal of the nitro group from 4-methyl-5-nitrocatechol (MNC) to yield 2-hydroxy-5-methylquinone. It can use both NADH and NADPH as electron donors, but prefers NADPH. Also able to use 4-nitrocatechol as substrate. In Burkholderia sp, this protein is 4-methyl-5-nitrocatechol 5-monooxygenase.